A 1601-amino-acid polypeptide reads, in one-letter code: Polycomb group protein Psc (1601 aa).

Disordered regions lie at residues 1–91 (MMTP…TTTT) and 165–245 (NGIK…DLAT). Low complexity-rich tracts occupy residues 8–91 (AIQP…TTTT) and 182–198 (SSSS…SSSS). Positions 199–215 (WPTTRRATSEDASSNGG) are enriched in polar residues. A compositionally biased stretch (low complexity) spans 228–245 (TAAVAASSTATTTSDLAT). Residues 263-302 (CHLCQGYLINATTIVECLHSFCHSCLINHLRKERFCPRCE) form an RING-type zinc finger. Disordered regions lie at residues 561-693 (KREK…FSED), 711-856 (VESP…NRTP), 895-960 (IGGG…SNNY), 1011-1097 (YKYT…EKQQ), 1116-1315 (SITI…LAPK), 1330-1408 (NPAA…HPVM), and 1512-1601 (AATG…TKSK). Low complexity predominate over residues 567-590 (SPQMSSKSSSKSSPCTPVSSPSEP). The span at 611–637 (DPERREIVKPLKPEKESRSKKKDKDGS) shows a compositional bias: basic and acidic residues. Positions 638 to 649 (PKSSSSSSSSSS) are enriched in low complexity. A phosphoserine mark is found at S656 and S658. Over residues 676–689 (SGVSTLSPRVTSGA) the composition is skewed to polar residues. Residues 729–739 (SVQQSASPKSK) show a composition bias toward low complexity. The span at 812–822 (LMPPPAKPPML) shows a compositional bias: pro residues. Polar residues predominate over residues 929-938 (TTPSQGNKNV). Over residues 1011-1022 (YKYTPKPTPNSG) the composition is skewed to low complexity. A compositionally biased stretch (gly residues) spans 1036 to 1045 (LGGGNGGSLG). Positions 1069 to 1085 (SSATQSGGNNGIVNNNI) are enriched in low complexity. Over residues 1116–1133 (SITISRDNGDSSSPNNGQ) the composition is skewed to polar residues. S1139 carries the post-translational modification Phosphoserine. Residues 1204–1217 (PQLPKVATPPPPSS) are compositionally biased toward pro residues. T1222, T1236, and T1251 each carry phosphothreonine. The segment covering 1247 to 1258 (VDKKTPSPEKRT) has biased composition (basic and acidic residues). A phosphoserine mark is found at S1253, S1266, and S1274. Over residues 1261–1272 (QMGSHSPTASEN) the composition is skewed to polar residues. Polar residues-rich tracts occupy residues 1352–1375 (QSGQ…SPPA) and 1561–1587 (APQT…NNGA).

Component of PRC1 complex, which contains many PcG proteins like Pc, ph, Scm, Psc, Sce and also chromatin-remodeling proteins such as histone deacetylases. This complex is distinct from the Esc/E(z) complex, at least composed of esc, E(z), Su(z)12, HDAC1/Rpd3 and Caf1-55. The 2 complexes however cooperate and interact together during the first 3 hours of development to establish PcG silencing.

It localises to the nucleus. Polycomb group (PcG) protein. PcG proteins act by forming multiprotein complexes, which are required to maintain the transcriptionally repressive state of homeotic genes throughout development. PcG proteins are not required to initiate repression, but to maintain it during later stages of development. Component of the PcG multiprotein PRC1 complex, a complex that acts via chromatin remodeling and modification of histones; it mediates monoubiquitination of histone H2A 'Lys-118', rendering chromatin heritably changed in its expressibility. Needed to maintain expression patterns of the homeotic selector genes of the Antennapedia (Antp-C) and Bithorax (BX-C) complexes, and hence for the maintenance of segmental determination. This Drosophila melanogaster (Fruit fly) protein is Polycomb group protein Psc (Psc).